A 410-amino-acid polypeptide reads, in one-letter code: ACT domain-containing protein ACR10 (410 aa).

3 consecutive ACT domains span residues Val22 to Gln105, Leu114 to Pro197, and Leu245 to Met324.

Its function is as follows. May bind amino acids. The chain is ACT domain-containing protein ACR10 from Arabidopsis thaliana (Mouse-ear cress).